We begin with the raw amino-acid sequence, 239 residues long: tRNA (guanine-N(7)-)-methyltransferase (239 aa).

S-adenosyl-L-methionine-binding residues include Glu69, Glu94, Asp121, and Asp144. The active site involves Asp144. Residue Lys148 participates in substrate binding. The interval 150–155 (RHNKRR) is interaction with RNA. Substrate contacts are provided by residues Asp180 and 217–220 (TKFE).

It belongs to the class I-like SAM-binding methyltransferase superfamily. TrmB family. Monomer.

It catalyses the reaction guanosine(46) in tRNA + S-adenosyl-L-methionine = N(7)-methylguanosine(46) in tRNA + S-adenosyl-L-homocysteine. It functions in the pathway tRNA modification; N(7)-methylguanine-tRNA biosynthesis. In terms of biological role, catalyzes the formation of N(7)-methylguanine at position 46 (m7G46) in tRNA. The polypeptide is tRNA (guanine-N(7)-)-methyltransferase (Shigella boydii serotype 4 (strain Sb227)).